The primary structure comprises 80 residues: U-Asilidin(1)-Dg12 (80 aa).

Residues 1-24 form the signal peptide; sequence MARLLVVSVGVFLAVIMLSSETMS. Positions 25–46 are excised as a propeptide; the sequence is LPAGENLPALTLFEAQNQLIGL. Intrachain disulfides connect C53/C67, C60/C71, and C66/C78.

This sequence belongs to the asilidin-1 family. In terms of tissue distribution, expressed by the venom gland.

It is found in the secreted. In terms of biological role, neurotoxin that may modulate ions channels (other than those tested). In vivo, induces neurotoxic effects when injected into insects (tested on L.cuprina and A.domesticus). In Dolopus genitalis (Giant Australian assassin fly), this protein is U-Asilidin(1)-Dg12.